We begin with the raw amino-acid sequence, 33 residues long: Cecropin-C (33 aa).

At K21 the chain carries 5-hydroxylysine.

As to quaternary structure, monomer. In terms of tissue distribution, hemolymph.

The protein localises to the secreted. In terms of biological role, cecropins have lytic and antibacterial activity against several Gram-positive and Gram-negative bacteria. Also has activity against fungi. The protein is Cecropin-C of Heliothis virescens (Tobacco budworm moth).